A 639-amino-acid chain; its full sequence is E3 ubiquitin-protein ligase RNF12 (639 aa).

3 disordered regions span residues Met1–Arg28, Arg67–Arg403, and Asn467–Thr534. A compositionally biased stretch (low complexity) spans Ser11–Ser21. Polar residues-rich tracts occupy residues Ser110–Ser138 and Ile147–Glu166. The segment covering Arg213–Arg228 has biased composition (basic and acidic residues). The segment covering His244–Ser253 has biased composition (polar residues). Low complexity predominate over residues Ser269 to Arg286. The span at His290–Gly302 shows a compositional bias: polar residues. Composition is skewed to low complexity over residues Gln303–Thr327 and Ser335–Ser348. A compositionally biased stretch (polar residues) spans Asn349–Arg358. Residues Arg372–Ile382 are compositionally biased toward basic and acidic residues. Residues Ala383–Tyr399 show a composition bias toward polar residues. Pro residues-rich tracts occupy residues Asn473–Ala482 and Pro493–Val506. The segment at Cys585–Arg626 adopts an RING-type; atypical zinc-finger fold. Positions Glu636–Val639 match the PDZ-binding motif.

Belongs to the RNF12 family. As to quaternary structure, forms homodimers through the C-terminal region. The N-terminus interacts with the homeobox of LIM/homeobox factor lhx1/lim1, with lhx3/lim3 and lhx5/lim5, and with the N-terminus of ldb1.

It is found in the nucleus. The catalysed reaction is S-ubiquitinyl-[E2 ubiquitin-conjugating enzyme]-L-cysteine + [acceptor protein]-L-lysine = [E2 ubiquitin-conjugating enzyme]-L-cysteine + N(6)-ubiquitinyl-[acceptor protein]-L-lysine.. Its pathway is protein modification; protein ubiquitination. Acts as an E3 ubiquitin-protein ligase specific for ldb1, mediating ubiquitination and proteasome-dependent degradation of excess ldb1 in a RING-dependent manner. Does not degrade ldb1 bound to lhx1/lim1, nor lim1 itself and thus contributes to the establishment of proper ldb1-lhx1/lim1 stoichiometry and the formation of a ldb1-lhx1/lim1 complex. Interferes with Spemann organizer function and suppresses secondary axis formation induced by ldb1 and lhx1/lim1. This chain is E3 ubiquitin-protein ligase RNF12, found in Xenopus tropicalis (Western clawed frog).